The primary structure comprises 380 residues: Probable transposase for insertion sequence element IS701 (380 aa).

Functionally, involved in the transposition of the insertion sequence. The polypeptide is Probable transposase for insertion sequence element IS701 (Microchaete diplosiphon (Fremyella diplosiphon)).